Consider the following 236-residue polypeptide: Ribose-5-phosphate isomerase (236 aa).

Substrate contacts are provided by residues 27–30 (TGST), 84–87 (DGTD), and 97–100 (KGRG). The Proton acceptor role is filled by E106. K124 is a binding site for substrate.

Belongs to the ribose 5-phosphate isomerase family. Homodimer.

It catalyses the reaction aldehydo-D-ribose 5-phosphate = D-ribulose 5-phosphate. Its pathway is carbohydrate degradation; pentose phosphate pathway; D-ribose 5-phosphate from D-ribulose 5-phosphate (non-oxidative stage): step 1/1. In terms of biological role, involved in the first step of the non-oxidative branch of the pentose phosphate pathway. It catalyzes the reversible conversion of ribose-5-phosphate to ribulose 5-phosphate. The polypeptide is Ribose-5-phosphate isomerase (Plasmodium falciparum (isolate 3D7)).